Here is a 347-residue protein sequence, read N- to C-terminus: MVGLNNAVSLDIEEICNGGKEHHVKTCHGSVSVVVYGDQEKPALITYPDVALNYMSCFQGLFLCPEAVSLLLHNFCIYHISPPGHEFGAAPVCSNDPSPSVEDLADQILEVLNFFSLEAVMCMGITAGAYILSLFAIKHKERVLGLILISPLCKAPSWSEWFYYKVVSNLLYYYGMSGLLKDIFLQRYFSKEARGSSEVPERDVVHECRRLLGERHGSSLMRFLEAVNRRHDLTDGLKSLKCRTLIFVGDQSPFHSETLHMVTALDRKYSALVEVQACGSMVTEEQPHAMLIPMEFFFMGFGLYRPGRVSDSPRSPLSPSCISPELLSPESLGLKLKPIKTRVPTKC.

It belongs to the NDRG family. In terms of assembly, interacts with the heterodimers formed by GB1 and GG1, or GB1 and GG2. Interacts with RGS1.

The protein localises to the cytoplasm. Involved in a signaling pathway that modulates root auxin transport and auxin gradients. Acts partially by positively regulating the auxin carrier PIN2 and AUX1. Acts, together with GB1 as positive regulator of meristem initiation and branching. GB1 and NDL3 positively regulate basipetal inflorescence auxin transport and modulate MAX2 expression in shoots, which regulates organ and lateral meristem formation by the establishment and maintenance of auxin gradients. The polypeptide is Protein NDL3 (Arabidopsis thaliana (Mouse-ear cress)).